The chain runs to 332 residues: 2,3-diketo-L-gulonate reductase (332 aa).

The Proton donor role is filled by His-44. NAD(+) contacts are provided by residues 168–174, 224–225, and 304–306; these read ITMVDMS, WK, and GHE.

The protein belongs to the LDH2/MDH2 oxidoreductase family. DlgD subfamily. As to quaternary structure, homodimer.

The protein resides in the cytoplasm. The enzyme catalyses 3-dehydro-L-gulonate + NAD(+) = 2,3-dioxo-L-gulonate + NADH + H(+). It catalyses the reaction 3-dehydro-L-gulonate + NADP(+) = 2,3-dioxo-L-gulonate + NADPH + H(+). Functionally, catalyzes the reduction of 2,3-diketo-L-gulonate in the presence of NADH, to form 3-keto-L-gulonate. The chain is 2,3-diketo-L-gulonate reductase from Pasteurella multocida (strain Pm70).